A 556-amino-acid polypeptide reads, in one-letter code: Bifunctional methyltransferase (556 aa).

Positions 1-310 (MQYSIQKFLN…NRVIEISLIQ (310 aa)) are RF MTase. S-adenosyl-L-methionine-binding positions include 148-152 (GTGSG), Asp-171, Trp-200, and Asn-215. 215 to 218 (NPPY) provides a ligand contact to substrate. Residues 313–556 (RSYARRIGKS…IITKIPPKSY (244 aa)) form a tRNA MTase region. Residues 348–399 (KNYNSCKIKSNYTKFNLEKSKESVSRGAERIKIREHLRTYKEDVANFSSSTS) are insert. The S-adenosyl-L-methionine site is built by Glu-403, Glu-428, Asn-455, and Asp-477. Asp-477 is an active-site residue. Residues Lys-481 and Asp-513 each coordinate substrate.

The protein in the C-terminal section; belongs to the class I-like SAM-binding methyltransferase superfamily. TrmB family. This sequence in the N-terminal section; belongs to the protein N5-glutamine methyltransferase family. PrmC subfamily.

The catalysed reaction is L-glutaminyl-[peptide chain release factor] + S-adenosyl-L-methionine = N(5)-methyl-L-glutaminyl-[peptide chain release factor] + S-adenosyl-L-homocysteine + H(+). It carries out the reaction guanosine(46) in tRNA + S-adenosyl-L-methionine = N(7)-methylguanosine(46) in tRNA + S-adenosyl-L-homocysteine. Methylates the class 1 translation termination release factors RF1/PrfA and RF2/PrfB on the glutamine residue of the universally conserved GGQ motif. Functionally, catalyzes the formation of N(7)-methylguanine at position 46 (m7G46) in tRNA. The polypeptide is Bifunctional methyltransferase (prmC/trmB) (Rickettsia bellii (strain RML369-C)).